Here is a 215-residue protein sequence, read N- to C-terminus: Adenylate kinase (215 aa).

10-15 (GAGKGT) provides a ligand contact to ATP. The segment at 30–59 (STGDMFRAAIKEGTELGKQAKALMDQGKLV) is NMP. AMP is bound by residues threonine 31, arginine 36, 57–59 (KLV), 85–88 (GFPR), and glutamine 92. The LID stretch occupies residues 122–159 (GRRVHQPSGRTYHIIYNPPKVAGQDDITGEELITRADD). ATP contacts are provided by residues arginine 123 and 132–133 (TY). Residues arginine 156 and arginine 167 each coordinate AMP. Lysine 200 contacts ATP.

This sequence belongs to the adenylate kinase family. Monomer.

It localises to the cytoplasm. It carries out the reaction AMP + ATP = 2 ADP. The protein operates within purine metabolism; AMP biosynthesis via salvage pathway; AMP from ADP: step 1/1. Catalyzes the reversible transfer of the terminal phosphate group between ATP and AMP. Plays an important role in cellular energy homeostasis and in adenine nucleotide metabolism. The chain is Adenylate kinase from Haemophilus ducreyi (strain 35000HP / ATCC 700724).